The chain runs to 431 residues: Enolase (431 aa).

Residues H157 and E166 each contribute to the substrate site. Residue E209 is the Proton donor of the active site. Mg(2+) is bound by residues D244, E293, and D318. Substrate is bound by residues E293 and D318. K343 serves as the catalytic Proton acceptor. Substrate-binding positions include 370–373 (SHRS) and K394.

Belongs to the enolase family. In terms of assembly, homodimer. It depends on Mg(2+) as a cofactor.

The protein localises to the cytoplasm. It catalyses the reaction (2R)-2-phosphoglycerate = phosphoenolpyruvate + H2O. It functions in the pathway carbohydrate degradation; glycolysis; pyruvate from D-glyceraldehyde 3-phosphate: step 4/5. This is Enolase (ENO) from Fasciola hepatica (Liver fluke).